The primary structure comprises 413 residues: Hibernation-specific plasma protein HP-55 (413 aa).

The signal sequence occupies residues 1-24; it reads MPSSISWGLLLLAALSCLGPGSLA. Q25 bears the Pyrrolidone carboxylic acid mark. N-linked (GlcNAc...) asparagine glycosylation is found at N65, N102, N165, and N266. An RCL region spans residues 368-387; the sequence is GGTVLGAEAMLQAPIMKFDR.

Belongs to the serpin family. As to quaternary structure, plasma proteins HP-20, HP-25, HP-27 and HP-55 form a 140 kDa complex via disulfide bonds in the plasma. The N-terminus is blocked. As to expression, plasma; synthesized in the liver.

Its subcellular location is the secreted. Protease inhibitor. This is Hibernation-specific plasma protein HP-55 from Tamias sibiricus (Siberian chipmunk).